The following is a 144-amino-acid chain: Nucleoside diphosphate kinase (144 aa).

Residues K11, F59, R87, T93, R104, and N114 each coordinate ATP. H117 serves as the catalytic Pros-phosphohistidine intermediate.

Belongs to the NDK family. As to quaternary structure, homotetramer. It depends on Mg(2+) as a cofactor.

It is found in the cytoplasm. The enzyme catalyses a 2'-deoxyribonucleoside 5'-diphosphate + ATP = a 2'-deoxyribonucleoside 5'-triphosphate + ADP. It catalyses the reaction a ribonucleoside 5'-diphosphate + ATP = a ribonucleoside 5'-triphosphate + ADP. Major role in the synthesis of nucleoside triphosphates other than ATP. The ATP gamma phosphate is transferred to the NDP beta phosphate via a ping-pong mechanism, using a phosphorylated active-site intermediate. This chain is Nucleoside diphosphate kinase, found in Vibrio atlanticus (strain LGP32) (Vibrio splendidus (strain Mel32)).